The following is a 953-amino-acid chain: TPR repeat-containing protein ZIP4 (953 aa).

Residues 129 to 162 (ASFFHRSGLAWLDLGRVDLASACFEKATPLVSAA) form a TPR 1 repeat. Residues 248–269 (AASPSSSSPRTPPYGGATPKTP) are disordered. 2 TPR repeats span residues 432–465 (HALL…VSRD) and 473–506 (ADCF…EPNI). A disordered region spans residues 925–953 (VSGDEPDECSQEEAPKASISGSMSQPVLV). Positions 943–953 (ISGSMSQPVLV) are enriched in polar residues.

Interacts with HEI10 and SHOC1.

The protein resides in the nucleus. It localises to the chromosome. In terms of biological role, required for crossover formation, complete synapsis of homologous chromosomes and bivalent formation during meiosis. Is specific to recombination events resulting in interference-sensitive crossovers (class I meiotic crossover) and works cooperatively with MER3 to promote crossovers. The polypeptide is TPR repeat-containing protein ZIP4 (Oryza sativa subsp. japonica (Rice)).